The chain runs to 348 residues: MTVRIAINGFGRIGRNVVRALYESGRRAEITVVAINELADAAGMAHLLKYDTSHGRFAWEVRHEREQLFVGDDVIRILHERTLADLPWRELGVDIVLDCTGVYGNREHGEAHIAAGAKKVLFSHPGSNDLDATVVFGVNQNQLRAEHRIVSNASCTTNCIIPVIKLLDDAYGIESGTVTTIHSAMNDQQVIDAYHSDLRRTRAASQSIIPVDTKLAAGITRIFPQFNDRFEAIAVRVPTINVTAIDLSVTVKKPVKASEVNQLLQKAAQGAFHGIVDYTESPLVSIDFNHDPHSAIVDGTQTRVSGAHLIKTLVWCDNEWGFANRMLDTTLAMAAVGFRLDASASTKL.

Residues 12-13 (RI) and Arg-81 contribute to the NAD(+) site. Residues 154 to 156 (SCT), Arg-200, 213 to 214 (TK), and Arg-236 contribute to the substrate site. Cys-155 (nucleophile) is an active-site residue. Asn-318 lines the NAD(+) pocket.

This sequence belongs to the glyceraldehyde-3-phosphate dehydrogenase family. Epd subfamily. In terms of assembly, homotetramer.

It is found in the cytoplasm. It catalyses the reaction D-erythrose 4-phosphate + NAD(+) + H2O = 4-phospho-D-erythronate + NADH + 2 H(+). Its pathway is cofactor biosynthesis; pyridoxine 5'-phosphate biosynthesis; pyridoxine 5'-phosphate from D-erythrose 4-phosphate: step 1/5. Its function is as follows. Catalyzes the NAD-dependent conversion of D-erythrose 4-phosphate to 4-phosphoerythronate. This is D-erythrose-4-phosphate dehydrogenase from Salmonella schwarzengrund (strain CVM19633).